Here is a 379-residue protein sequence, read N- to C-terminus: Probable peptidoglycan glycosyltransferase FtsW (379 aa).

Over 1–15 (MHKTEAQTYLLYDRT) the chain is Cytoplasmic. The helical transmembrane segment at 16–36 (LLLLTMGLVGIGLVMVISTSM) threads the bilayer. At 37–52 (PIGVRLSEDPFYFARR) the chain is on the periplasmic side. A helical transmembrane segment spans residues 53–73 (YAFYLGLAVVLSLVTLGIPMA). Over 74–79 (SWQRGS) the chain is Cytoplasmic. The helical transmembrane segment at 80 to 100 (SLILLITLIMLLLVLIAGQSV) threads the bilayer. Residues 101 to 113 (NGAVRWLALGPWR) are Periplasmic-facing. The helical transmembrane segment at 114–133 (IQPAELSKLALFCYLASYLV) threads the bilayer. Residues 134-139 (RKAEEV) lie on the Cytoplasmic side of the membrane. The helical transmembrane segment at 140–162 (RTNFWGFCKPIGVMVLLAILLLA) threads the bilayer. The Periplasmic segment spans residues 163-165 (QPD). The helical transmembrane segment at 166-183 (LGTVLVLFITTLAMLFLA) threads the bilayer. Residues 184 to 186 (EAK) are Cytoplasmic-facing. A helical transmembrane segment spans residues 187–207 (IWQFLPIIGTGILAVMLLIIA). Over 208-269 (KPYRRRRVTS…TEAHTDFICS (62 aa)) the chain is Periplasmic. Residues 270–290 (ILGEELGYFGVLLALLMVFLV) form a helical membrane-spanning segment. At 291-301 (AFRAMSIGRKA) the chain is on the cytoplasmic side. The helical transmembrane segment at 302-322 (LAINQIFSGFLACSIGIWFSF) threads the bilayer. Over 323 to 342 (QTMVNVGAAAGMLPTKGLTL) the chain is Periplasmic. Residues 343–363 (PFISYGGSSMLIMLTAIVLLI) traverse the membrane as a helical segment. At 364–379 (RIDFETRLAKLQAFVR) the chain is on the cytoplasmic side.

The protein belongs to the SEDS family. FtsW subfamily.

It is found in the cell inner membrane. It carries out the reaction [GlcNAc-(1-&gt;4)-Mur2Ac(oyl-L-Ala-gamma-D-Glu-L-Lys-D-Ala-D-Ala)](n)-di-trans,octa-cis-undecaprenyl diphosphate + beta-D-GlcNAc-(1-&gt;4)-Mur2Ac(oyl-L-Ala-gamma-D-Glu-L-Lys-D-Ala-D-Ala)-di-trans,octa-cis-undecaprenyl diphosphate = [GlcNAc-(1-&gt;4)-Mur2Ac(oyl-L-Ala-gamma-D-Glu-L-Lys-D-Ala-D-Ala)](n+1)-di-trans,octa-cis-undecaprenyl diphosphate + di-trans,octa-cis-undecaprenyl diphosphate + H(+). Its pathway is cell wall biogenesis; peptidoglycan biosynthesis. Functionally, peptidoglycan polymerase that is essential for cell division. The protein is Probable peptidoglycan glycosyltransferase FtsW of Moranella endobia (strain PCIT).